Consider the following 610-residue polypeptide: Solute carrier family 23 member 3 (610 aa).

Polar residues predominate over residues Met-1–Ser-16. Positions Met-1 to Ser-32 are disordered. Over Met-1–Cys-49 the chain is Cytoplasmic. Residues Leu-50–Leu-70 form a helical membrane-spanning segment. Over Leu-71–Gln-85 the chain is Extracellular. A helical transmembrane segment spans residues Leu-86–Ser-106. The Cytoplasmic portion of the chain corresponds to Arg-107–Glu-164. The chain crosses the membrane as a helical span at residues Val-165–Pro-185. At Gly-186–His-187 the chain is on the extracellular side. The helical transmembrane segment at Val-188–Ala-208 threads the bilayer. At His-209–Glu-211 the chain is on the cytoplasmic side. Residues Val-212–Val-232 traverse the membrane as a helical segment. The Extracellular portion of the chain corresponds to Cys-233–Ser-266. The helical transmembrane segment at Val-267–Pro-287 threads the bilayer. Over Gln-288 to Ala-316 the chain is Cytoplasmic. A helical transmembrane segment spans residues Leu-317–Leu-337. At Cys-338 to Gly-355 the chain is on the extracellular side. A helical membrane pass occupies residues Leu-356–Ala-376. The Cytoplasmic segment spans residues Ser-377 to Gln-394. A helical transmembrane segment spans residues Val-395–Gln-414. The Extracellular segment spans residues Leu-415–Val-423. The helical transmembrane segment at Val-424–Ala-446 threads the bilayer. Residues Asp-447–Arg-452 are Cytoplasmic-facing. A helical membrane pass occupies residues Asn-453–Arg-472. Over Glu-473–Asp-486 the chain is Extracellular. The helical transmembrane segment at Val-487 to Leu-507 threads the bilayer. Topologically, residues Glu-508–Lys-610 are cytoplasmic. Positions Pro-571–Lys-610 are disordered. A compositionally biased stretch (acidic residues) spans Asp-573–Ala-588. Residues Ser-601–Lys-610 are compositionally biased toward basic and acidic residues.

It belongs to the nucleobase:cation symporter-2 (NCS2) (TC 2.A.40) family.

The protein localises to the membrane. It carries out the reaction hypoxanthine(out) + Na(+)(out) = hypoxanthine(in) + Na(+)(in). Its function is as follows. Acts as a sodium-dependent hypoxanthine transporter. May show xanthine-hypoxanthine exchange activity. This Homo sapiens (Human) protein is Solute carrier family 23 member 3 (SLC23A3).